The primary structure comprises 328 residues: GTPase Obg (328 aa).

In terms of domain architecture, Obg spans Met-1 to Leu-159. Residues Ser-160–Lys-327 enclose the OBG-type G domain. Residues Gly-166–Ser-173, Phe-191–Val-195, Asp-212–Gly-215, Asn-279–Asp-282, and Ser-308–Tyr-310 contribute to the GTP site. Mg(2+) contacts are provided by Ser-173 and Thr-193.

Belongs to the TRAFAC class OBG-HflX-like GTPase superfamily. OBG GTPase family. As to quaternary structure, monomer. It depends on Mg(2+) as a cofactor.

The protein resides in the cytoplasm. Functionally, an essential GTPase which binds GTP, GDP and possibly (p)ppGpp with moderate affinity, with high nucleotide exchange rates and a fairly low GTP hydrolysis rate. Plays a role in control of the cell cycle, stress response, ribosome biogenesis and in those bacteria that undergo differentiation, in morphogenesis control. This Rickettsia bellii (strain RML369-C) protein is GTPase Obg.